The following is a 269-amino-acid chain: Putative pyruvate, phosphate dikinase regulatory protein (269 aa).

147–154 is a binding site for ADP; sequence GVSRSSKT.

It belongs to the pyruvate, phosphate/water dikinase regulatory protein family. PDRP subfamily.

It carries out the reaction N(tele)-phospho-L-histidyl/L-threonyl-[pyruvate, phosphate dikinase] + ADP = N(tele)-phospho-L-histidyl/O-phospho-L-threonyl-[pyruvate, phosphate dikinase] + AMP + H(+). It catalyses the reaction N(tele)-phospho-L-histidyl/O-phospho-L-threonyl-[pyruvate, phosphate dikinase] + phosphate + H(+) = N(tele)-phospho-L-histidyl/L-threonyl-[pyruvate, phosphate dikinase] + diphosphate. Bifunctional serine/threonine kinase and phosphorylase involved in the regulation of the pyruvate, phosphate dikinase (PPDK) by catalyzing its phosphorylation/dephosphorylation. This Trichlorobacter lovleyi (strain ATCC BAA-1151 / DSM 17278 / SZ) (Geobacter lovleyi) protein is Putative pyruvate, phosphate dikinase regulatory protein.